The following is a 149-amino-acid chain: Calmodulin (149 aa).

Ala2 is modified (N-acetylalanine). 4 consecutive EF-hand domains span residues 8-43 (EQVS…LGQN), 44-79 (PSES…KMKD), 81-116 (DSEE…IGEK), and 117-149 (LTDD…MMQK). Positions 21, 23, 25, 27, 32, 57, 59, 61, 63, 68, 94, 96, 98, 105, 130, 132, 134, 136, and 141 each coordinate Ca(2+).

Belongs to the calmodulin family.

Functionally, calmodulin mediates the control of a large number of enzymes, ion channels and other proteins by Ca(2+). Among the enzymes to be stimulated by the calmodulin-Ca(2+) complex are a number of protein kinases and phosphatases. The protein is Calmodulin of Colletotrichum gloeosporioides (Anthracnose fungus).